The chain runs to 182 residues: Large ribosomal subunit protein uL5 (182 aa).

Belongs to the universal ribosomal protein uL5 family. As to quaternary structure, part of the 50S ribosomal subunit; part of the 5S rRNA/L5/L18/L25 subcomplex. Contacts the 5S rRNA and the P site tRNA. Forms a bridge to the 30S subunit in the 70S ribosome.

Its function is as follows. This is one of the proteins that bind and probably mediate the attachment of the 5S RNA into the large ribosomal subunit, where it forms part of the central protuberance. In the 70S ribosome it contacts protein S13 of the 30S subunit (bridge B1b), connecting the 2 subunits; this bridge is implicated in subunit movement. Contacts the P site tRNA; the 5S rRNA and some of its associated proteins might help stabilize positioning of ribosome-bound tRNAs. The protein is Large ribosomal subunit protein uL5 of Thermus thermophilus (strain ATCC BAA-163 / DSM 7039 / HB27).